The chain runs to 235 residues: MYYVTPRQLVFPGDVIATADSKVEGPVYLDNGKYRSLVVGLVEFREDVVVVVPLEGTYKPKKGDLVIGYVTDVLATGWEVDVRSFMPAYLPVGEALHRHVDLETTPLTTFLNIGDVVVAKVKDVDLTDEYPIILTLKDEKVGKVESGTVVEITPVKVPRVIGKRGSMLNTLMELGCDIVVGQNGRIWVKCKDPRDEVFLASLIRKIEAESHVMGLTDRIRAEIENYKTSKQQGTV.

One can recognise an S1 motif domain in the interval 63-137; that stretch reads GDLVIGYVTD…DEYPIILTLK (75 aa). One can recognise a KH domain in the interval 147–203; the sequence is GTVVEITPVKVPRVIGKRGSMLNTLMELGCDIVVGQNGRIWVKCKDPRDEVFLASLI.

This sequence belongs to the RRP4 family. As to quaternary structure, component of the archaeal exosome complex. Forms a trimer of Rrp4 and/or Csl4 subunits. The trimer associates with a hexameric ring-like arrangement composed of 3 Rrp41-Rrp42 heterodimers.

Its subcellular location is the cytoplasm. In terms of biological role, non-catalytic component of the exosome, which is a complex involved in RNA degradation. Increases the RNA binding and the efficiency of RNA degradation. Confers strong poly(A) specificity to the exosome. The polypeptide is Exosome complex component Rrp4 (Pyrobaculum aerophilum (strain ATCC 51768 / DSM 7523 / JCM 9630 / CIP 104966 / NBRC 100827 / IM2)).